The following is a 398-amino-acid chain: Cell division protein FtsZ (398 aa).

Residues 21–25 (GGGGN), 108–110 (GTG), E139, R143, and D187 each bind GTP.

It belongs to the FtsZ family. As to quaternary structure, homodimer. Polymerizes to form a dynamic ring structure in a strictly GTP-dependent manner. Interacts directly with several other division proteins.

The protein localises to the cytoplasm. In terms of biological role, essential cell division protein that forms a contractile ring structure (Z ring) at the future cell division site. The regulation of the ring assembly controls the timing and the location of cell division. One of the functions of the FtsZ ring is to recruit other cell division proteins to the septum to produce a new cell wall between the dividing cells. Binds GTP and shows GTPase activity. The chain is Cell division protein FtsZ from Pseudomonas putida (strain ATCC 47054 / DSM 6125 / CFBP 8728 / NCIMB 11950 / KT2440).